The following is a 201-amino-acid chain: Protein LIGHT-DEPENDENT SHORT HYPOCOTYLS 2 (201 aa).

Over residues 1–14 the composition is skewed to polar residues; the sequence is MDLISQNHNNRNPN. Disordered stretches follow at residues 1–37 and 151–201; these read MDLI…YENQ and SRGV…GATQ. Residues 15 to 32 are compositionally biased toward low complexity; the sequence is TSLSTQTPSSFSSPPSSS. Residues 33–160 enclose the ALOG domain; it reads RYENQKRRDW…SRGVSYEKKR (128 aa). The Nuclear localization signal motif lies at 158 to 162; sequence KKRKR.

It belongs to the plant homeotic and developmental regulators ALOG protein family.

It localises to the nucleus. In terms of biological role, probable transcription regulator that acts as a developmental regulator by promoting cell growth in response to light. The sequence is that of Protein LIGHT-DEPENDENT SHORT HYPOCOTYLS 2 (LSH2) from Arabidopsis thaliana (Mouse-ear cress).